The chain runs to 196 residues: Pycsar effector protein GmPycTM (196 aa).

Transmembrane regions (helical) follow at residues 34 to 54 (ISFSLAFAGILLGGFFSSGII), 82 to 102 (ITTIVLVVFIILMIVSLTYLF), and 176 to 196 (VNWLIASTIVFIILNGMFLFL).

The protein localises to the cell inner membrane. In terms of biological role, pycsar (pyrimidine cyclase system for antiphage resistance) provides immunity against bacteriophage. The pyrimidine cyclase (PycC) synthesizes cyclic nucleotides in response to infection; these serve as specific second messenger signals. The signals activate the adjacent effector, leading to bacterial cell death and abortive phage infection. A clade C Pycsar system. Its function is as follows. The effector gene of a two-gene Pycsar system. Expression of this and adjacent uridylate cyclase GmPycC (AC P0DV42) probably confers resistance to bacteriophage. The genes are probably only expressed in response to bacteriophage infection. Probably only responds to cUMP (produced by its cognate NTP cyclase), acts by impairing membrane integrity. The protein is Pycsar effector protein GmPycTM of Gulbenkiania mobilis.